A 172-amino-acid chain; its full sequence is MERAEKREFVTELNEVFKASGSVVVAHYAGATVAQMNDFRSKMRAAGGTVKVAKNRLAKIALQGTEAEGITDLFKGQTLIAYSTDPITAPKVVMDFAKTNDKIVVLGGAMGTTTLNADAVKSLATLPSLDELRAKLLGMIQTPATRIAGVVAAPASQLARVFAAYAKKDEAA.

The protein belongs to the universal ribosomal protein uL10 family. In terms of assembly, part of the ribosomal stalk of the 50S ribosomal subunit. The N-terminus interacts with L11 and the large rRNA to form the base of the stalk. The C-terminus forms an elongated spine to which L12 dimers bind in a sequential fashion forming a multimeric L10(L12)X complex.

Its function is as follows. Forms part of the ribosomal stalk, playing a central role in the interaction of the ribosome with GTP-bound translation factors. In Rhizobium leguminosarum bv. trifolii (strain WSM2304), this protein is Large ribosomal subunit protein uL10.